The chain runs to 564 residues: Protein glycosylation K (564 aa).

The Cytoplasmic portion of the chain corresponds to 1–15 (MLKKLFFILSKEDKN). Residues 16 to 38 (FLFFLLVFSVFISFIETFAISLV) form a helical membrane-spanning segment. The region spanning 17-319 (LFFLLVFSVF…IITSYHDLLY (303 aa)) is the ABC transmembrane type-1 domain. The Extracellular portion of the chain corresponds to 39–76 (MPFITLASDFSYFDRNKYLISLKEYLNIPVFEIIVYFG). An important for stimulation of ATPase activity by lipid-linked oligosaccharides and subsequent translocation of lipid-linked oligosaccharides region spans residues 46-67 (SDFSYFDRNKYLISLKEYLNIP). The chain crosses the membrane as a helical span at residues 77-98 (VGLIVFYVFRALLNAYYFHLLA). The Cytoplasmic portion of the chain corresponds to 99 to 149 (RFSKGRYHAIAYKVFSKFLNINYEKFTQKNQSEILKSITGEVYNLSTMISS). A helical transmembrane segment spans residues 150 to 170 (FLLLMSEIFVVLLLYALMLLI). Residues 171–173 (NYK) lie on the Extracellular side of the membrane. Residues 174 to 197 (ITLFLSIFMVLNAFILVKILSPII) traverse the membrane as a helical segment. The Cytoplasmic segment spans residues 198–254 (KKAGVRREEAMKNFFEILNTNLNNFKFIKLKTKEDGVLSLFKAQSEAFSKANITNES). The helical transmembrane segment at 255-276 (VAAVPRIYLEGIGFCVLVFIVV) threads the bilayer. Residues 277 to 292 (FLVLKNESDISGILST) are Extracellular-facing. The helical transmembrane segment at 293 to 314 (ISIFVLALYRLMPSANRIITSY) threads the bilayer. At 315–564 (HDLLYYHSSL…LEHGKLKEEK (250 aa)) the chain is on the cytoplasmic side. Residues 349–564 (LKICNLSFGY…LEHGKLKEEK (216 aa)) form the ABC transporter domain. 382–389 (GESGCGKS) is a binding site for ATP.

It belongs to the ABC transporter superfamily. As to quaternary structure, homodimer; domain-swapped. Helices that arise in transmembrane regions 4 and 5 from one subunit cross over and contact the nucleotide-binding domain from the other subunit.

The protein resides in the cell inner membrane. The catalysed reaction is ATP + H2O + lipopolysaccharideSide 1 = ADP + phosphate + lipopolysaccharideSide 2.. Its pathway is protein modification; protein glycosylation. In terms of biological role, mediates the ATP-dependent translocation of the undecaprenylpyrophosphate-linked heptasaccharide intermediate across the cell membrane; this is an essential step during the N-linked protein glycosylation pathway. Transport across the membrane is effected via ATP-driven conformation changes. Most likely, only the polar and charged part of the glycolipid enter the substrate-binding cavity, and the lipid tail remains exposed to the membrane lipids during the transmembrane flipping process. This chain is Protein glycosylation K (pglK), found in Campylobacter jejuni subsp. jejuni serotype O:2 (strain ATCC 700819 / NCTC 11168).